The primary structure comprises 477 residues: Bifunctional protein HldE (477 aa).

Residues 1–318 (MKVTLPDFRR…ENAIRGRADT (318 aa)) form a ribokinase region. 195 to 198 (NLSE) lines the ATP pocket. Aspartate 264 is a catalytic residue. The cytidylyltransferase stretch occupies residues 344–477 (MTNGVFDILH…INIIRQGQND (134 aa)).

This sequence in the N-terminal section; belongs to the carbohydrate kinase PfkB family. In the C-terminal section; belongs to the cytidylyltransferase family. Homodimer.

The enzyme catalyses D-glycero-beta-D-manno-heptose 7-phosphate + ATP = D-glycero-beta-D-manno-heptose 1,7-bisphosphate + ADP + H(+). The catalysed reaction is D-glycero-beta-D-manno-heptose 1-phosphate + ATP + H(+) = ADP-D-glycero-beta-D-manno-heptose + diphosphate. Its pathway is nucleotide-sugar biosynthesis; ADP-L-glycero-beta-D-manno-heptose biosynthesis; ADP-L-glycero-beta-D-manno-heptose from D-glycero-beta-D-manno-heptose 7-phosphate: step 1/4. It functions in the pathway nucleotide-sugar biosynthesis; ADP-L-glycero-beta-D-manno-heptose biosynthesis; ADP-L-glycero-beta-D-manno-heptose from D-glycero-beta-D-manno-heptose 7-phosphate: step 3/4. Catalyzes the phosphorylation of D-glycero-D-manno-heptose 7-phosphate at the C-1 position to selectively form D-glycero-beta-D-manno-heptose-1,7-bisphosphate. Functionally, catalyzes the ADP transfer from ATP to D-glycero-beta-D-manno-heptose 1-phosphate, yielding ADP-D-glycero-beta-D-manno-heptose. This chain is Bifunctional protein HldE, found in Edwardsiella ictaluri (strain 93-146).